Consider the following 206-residue polypeptide: MARYIGPKCKLSRREGTDLFLKSGARALDSKCNMETAPGQHGQRRGRLSDYGLQLREKQKVRRMYGVLEKQFRNYYKEAARIKGATGENLLQLLERRLDNVVYRMGFGSTRSEARQLVSHKAILVNGKAVNIPSYQVKPGDVVSIREKSKNQLRIKGSLELAAQRATLEWIEVDAAKMSGTFKSVPERTDLSPDINENLIVELYSK.

The S4 RNA-binding domain maps to 96–156; the sequence is RRLDNVVYRM…EKSKNQLRIK (61 aa).

Belongs to the universal ribosomal protein uS4 family. Part of the 30S ribosomal subunit. Contacts protein S5. The interaction surface between S4 and S5 is involved in control of translational fidelity.

Functionally, one of the primary rRNA binding proteins, it binds directly to 16S rRNA where it nucleates assembly of the body of the 30S subunit. With S5 and S12 plays an important role in translational accuracy. The polypeptide is Small ribosomal subunit protein uS4 (Hahella chejuensis (strain KCTC 2396)).